Here is a 562-residue protein sequence, read N- to C-terminus: Glutamine--tRNA ligase (562 aa).

A 'HIGH' region motif is present at residues Pro35 to His45. ATP-binding positions include Glu36 to Asn38 and His42 to Ser48. Asp68 and Tyr213 together coordinate L-glutamine. ATP is bound by residues Thr232, Arg262–Leu263, and Leu270–Lys272. The 'KMSKS' region signature appears at Ile269–Arg273.

It belongs to the class-I aminoacyl-tRNA synthetase family. In terms of assembly, monomer.

The protein resides in the cytoplasm. It carries out the reaction tRNA(Gln) + L-glutamine + ATP = L-glutaminyl-tRNA(Gln) + AMP + diphosphate. This is Glutamine--tRNA ligase from Buchnera aphidicola subsp. Schizaphis graminum (strain Sg).